A 192-amino-acid chain; its full sequence is Fe/S biogenesis protein NfuA (192 aa).

Residues C149 and C152 each contribute to the [4Fe-4S] cluster site.

Belongs to the NfuA family. In terms of assembly, homodimer. It depends on [4Fe-4S] cluster as a cofactor.

Its function is as follows. Involved in iron-sulfur cluster biogenesis. Binds a 4Fe-4S cluster, can transfer this cluster to apoproteins, and thereby intervenes in the maturation of Fe/S proteins. Could also act as a scaffold/chaperone for damaged Fe/S proteins. The chain is Fe/S biogenesis protein NfuA from Shewanella amazonensis (strain ATCC BAA-1098 / SB2B).